A 427-amino-acid polypeptide reads, in one-letter code: Serine hydroxymethyltransferase (427 aa).

(6S)-5,6,7,8-tetrahydrofolate-binding positions include Leu122 and 126–128 (GHL). Lys231 is modified (N6-(pyridoxal phosphate)lysine). 355 to 357 (SPF) provides a ligand contact to (6S)-5,6,7,8-tetrahydrofolate.

The protein belongs to the SHMT family. In terms of assembly, homodimer. The cofactor is pyridoxal 5'-phosphate.

The protein resides in the cytoplasm. It carries out the reaction (6R)-5,10-methylene-5,6,7,8-tetrahydrofolate + glycine + H2O = (6S)-5,6,7,8-tetrahydrofolate + L-serine. It participates in one-carbon metabolism; tetrahydrofolate interconversion. The protein operates within amino-acid biosynthesis; glycine biosynthesis; glycine from L-serine: step 1/1. Functionally, catalyzes the reversible interconversion of serine and glycine with tetrahydrofolate (THF) serving as the one-carbon carrier. This reaction serves as the major source of one-carbon groups required for the biosynthesis of purines, thymidylate, methionine, and other important biomolecules. Also exhibits THF-independent aldolase activity toward beta-hydroxyamino acids, producing glycine and aldehydes, via a retro-aldol mechanism. This chain is Serine hydroxymethyltransferase, found in Synechococcus sp. (strain ATCC 27144 / PCC 6301 / SAUG 1402/1) (Anacystis nidulans).